Consider the following 644-residue polypeptide: Tubulin--tyrosine ligase-like protein 12 (644 aa).

The span at 1 to 13 (MEAERGPERRPAE) shows a compositional bias: basic and acidic residues. The segment at 1 to 25 (MEAERGPERRPAERSSPGQTPEEGA) is disordered. The TTL domain maps to 300–644 (PHGHIFKVYT…PGGCHVTCLV (345 aa)). ATP contacts are provided by residues 450-453 (SKYI), Lys468, and Asp470.

It belongs to the tubulin--tyrosine ligase family. Interacts with MAVS; the interaction prevents MAVS binding to TBK1 and IKBKE. Interacts (via N-terminus) with TBK1 (via protein kinase domain). Interacts (via TTL domain) with IKBKE (via protein kinase domain). Interacts with tubulin alpha. Interacts with histone H3 and histone H4 (when trimethylated at 'Lys-20' (H4K20me3)). Interacts with CBX3. As to expression, expressed in the basal layer of prostate and endothelial cells. Increased expression in prostatic intraepithelial neoplasia and metastatic lesions.

It localises to the cytoplasm. Its subcellular location is the midbody. The protein resides in the cytoskeleton. It is found in the microtubule organizing center. The protein localises to the centrosome. It localises to the spindle. Its subcellular location is the nucleus. Its function is as follows. Negatively regulates post-translational modifications of tubulin, including detyrosination of the C-terminus and polyglutamylation of glutamate residues. Also, indirectly promotes histone H4 trimethylation at 'Lys-20' (H4K20me3). Probably by controlling tubulin and/or histone H4 post-translational modifications, plays a role in mitosis and in maintaining chromosome number stability. During RNA virus-mediated infection, acts as a negative regulator of the RIG-I pathway by preventing MAVS binding to TBK1 and IKBKE. The sequence is that of Tubulin--tyrosine ligase-like protein 12 (TTLL12) from Homo sapiens (Human).